We begin with the raw amino-acid sequence, 586 residues long: Arginine--tRNA ligase (586 aa).

Residues 130 to 140 (ANPTGPMHVGH) carry the 'HIGH' region motif.

The protein belongs to the class-I aminoacyl-tRNA synthetase family. Monomer.

The protein localises to the cytoplasm. It catalyses the reaction tRNA(Arg) + L-arginine + ATP = L-arginyl-tRNA(Arg) + AMP + diphosphate. The chain is Arginine--tRNA ligase from Methylobacterium sp. (strain 4-46).